Reading from the N-terminus, the 721-residue chain is Protein Hook homolog 2 (721 aa).

Residues 7–123 (VELCDSLLTW…KMVQLVLGCA (117 aa)) form the Calponin-homology (CH) domain. 2 coiled-coil regions span residues 181-425 (LSED…RCSH) and 484-659 (DLQN…EKLI). Residues 696 to 721 (TNARRGQISRSHTLLPRYTDKRQSLS) are disordered.

This sequence belongs to the hook family. As to quaternary structure, interacts with microtubules.

It localises to the cytoplasm. It is found in the cytoskeleton. The protein resides in the microtubule organizing center. The protein localises to the centrosome. Its function is as follows. May function to promote vesicle trafficking and/or fusion. May contribute to the establishment and maintenance of centrosome function. The sequence is that of Protein Hook homolog 2 (hook2) from Xenopus laevis (African clawed frog).